A 134-amino-acid polypeptide reads, in one-letter code: Mini-ribonuclease 3 (134 aa).

Aspartate 22 is a catalytic residue.

It belongs to the MrnC RNase family. As to quaternary structure, homodimer. Requires Mg(2+) as cofactor.

The protein localises to the cytoplasm. In terms of biological role, involved in correct processing of both the 5' and 3' ends of 23S rRNA precursor. Processes 30S rRNA precursor transcript even in absence of ribonuclease 3 (Rnc); Rnc processes 30S rRNA into smaller rRNA precursors. In Staphylococcus aureus (strain NCTC 8325 / PS 47), this protein is Mini-ribonuclease 3.